A 199-amino-acid polypeptide reads, in one-letter code: Peroxiredoxin-2 (199 aa).

The region spanning 7 to 165 is the Thioredoxin domain; it reads AHVGKPAPEF…ALRLVQAFQY (159 aa). Cys52 functions as the Cysteine sulfenic acid (-SOH) intermediate in the catalytic mechanism. Ser113 carries the phosphoserine modification. Thr183 bears the Phosphothreonine mark. At Lys197 the chain carries N6-acetyllysine.

It belongs to the peroxiredoxin family. AhpC/Prx1 subfamily. In terms of assembly, homodimer; disulfide-linked, upon oxidation. 5 homodimers assemble to form a ring-like decamer. Interacts with TIPIN. The enzyme can be inactivated by further oxidation of the cysteine sulfenic acid (C(P)-SOH) to sulphinic acid (C(P)-SO2H) instead of its condensation to a disulfide bond. It can be reactivated by forming a transient disulfide bond with sulfiredoxin SRXN1, which reduces the cysteine sulfinic acid in an ATP- and Mg-dependent manner. Post-translationally, acetylation increases resistance to transition to high molecular-mass complexes. Deacetylated by HDAC6 which decreases reducing activity.

Its subcellular location is the cytoplasm. The catalysed reaction is a hydroperoxide + [thioredoxin]-dithiol = an alcohol + [thioredoxin]-disulfide + H2O. In terms of biological role, thiol-specific peroxidase that catalyzes the reduction of hydrogen peroxide and organic hydroperoxides to water and alcohols, respectively. Plays a role in cell protection against oxidative stress by detoxifying peroxides and as sensor of hydrogen peroxide-mediated signaling events. Might participate in the signaling cascades of growth factors and tumor necrosis factor-alpha by regulating the intracellular concentrations of H(2)O(2). The sequence is that of Peroxiredoxin-2 (PRDX2) from Bos taurus (Bovine).